Reading from the N-terminus, the 655-residue chain is Import motor subunit, mitochondrial (655 aa).

A mitochondrion-targeting transit peptide spans 1 to 23 (MLAAKNILNRSSLSSSFRIATRL). Thr-330 bears the Phosphothreonine mark. The disordered stretch occupies residues 629–655 (EQLYKNDSNNNNNNNNGNNAESDETKQ). Residues 637 to 647 (NNNNNNNNGNN) are compositionally biased toward low complexity.

This sequence belongs to the heat shock protein 70 family. In terms of assembly, component of the PAM complex, at least composed of SSC1 (mtHsp70), MGE1, TIM44, PAM16/TIM16, PAM17 and PAM18/TIM14. In the complex, SSC1 interacts directly with PAM18 and TIM44. Interacts with NAP1. Component of endonuclease SceI (endo.SceI), which is a heterodimer of ENS2 and SSC1.

The protein resides in the mitochondrion matrix. The enzyme catalyses ATP + H2O = ADP + phosphate + H(+). Functionally, essential component of the PAM complex, a complex required for the translocation of transit peptide-containing proteins from the inner membrane into the mitochondrial matrix in an ATP-dependent manner. Constitutes the ATP-driven core of the motor and binds the precursor preprotein. Required for the import of the processed frataxin homolog YFH1 into the mitochondrion. Acts as a non-catalytic component of endonuclease SceI (endo.SceI), which cleaves specifically at multiple sites on mitochondrial DNA and produces double-stranded breaks. SSC1 confers broader sequence specificity, greater stability, and higher activity on the catalytic subunit. This is Import motor subunit, mitochondrial from Saccharomyces cerevisiae (Baker's yeast).